A 212-amino-acid chain; its full sequence is Urease accessory protein UreG (212 aa).

GTP is bound at residue glycine 19–threonine 26.

It belongs to the SIMIBI class G3E GTPase family. UreG subfamily. As to quaternary structure, homodimer. UreD, UreF and UreG form a complex that acts as a GTP-hydrolysis-dependent molecular chaperone, activating the urease apoprotein by helping to assemble the nickel containing metallocenter of UreC. The UreE protein probably delivers the nickel.

The protein resides in the cytoplasm. Facilitates the functional incorporation of the urease nickel metallocenter. This process requires GTP hydrolysis, probably effectuated by UreG. In Vibrio parahaemolyticus, this protein is Urease accessory protein UreG.